Consider the following 284-residue polypeptide: 2,3,4,5-tetrahydropyridine-2,6-dicarboxylate N-succinyltransferase (284 aa).

It belongs to the transferase hexapeptide repeat family.

It localises to the cytoplasm. It catalyses the reaction (S)-2,3,4,5-tetrahydrodipicolinate + succinyl-CoA + H2O = (S)-2-succinylamino-6-oxoheptanedioate + CoA. The protein operates within amino-acid biosynthesis; L-lysine biosynthesis via DAP pathway; LL-2,6-diaminopimelate from (S)-tetrahydrodipicolinate (succinylase route): step 1/3. This chain is 2,3,4,5-tetrahydropyridine-2,6-dicarboxylate N-succinyltransferase, found in Brucella abortus (strain S19).